Reading from the N-terminus, the 303-residue chain is Succinate--CoA ligase [ADP-forming] subunit alpha (303 aa).

CoA-binding positions include 20–23 (TGSE), Lys46, and 108–110 (ITE). Tyr173 is a substrate binding site. The active-site Tele-phosphohistidine intermediate is the His259.

The protein belongs to the succinate/malate CoA ligase alpha subunit family. As to quaternary structure, heterotetramer of two alpha and two beta subunits.

The catalysed reaction is succinate + ATP + CoA = succinyl-CoA + ADP + phosphate. It catalyses the reaction GTP + succinate + CoA = succinyl-CoA + GDP + phosphate. It functions in the pathway carbohydrate metabolism; tricarboxylic acid cycle; succinate from succinyl-CoA (ligase route): step 1/1. Succinyl-CoA synthetase functions in the citric acid cycle (TCA), coupling the hydrolysis of succinyl-CoA to the synthesis of either ATP or GTP and thus represents the only step of substrate-level phosphorylation in the TCA. The alpha subunit of the enzyme binds the substrates coenzyme A and phosphate, while succinate binding and nucleotide specificity is provided by the beta subunit. In Mycobacterium bovis (strain ATCC BAA-935 / AF2122/97), this protein is Succinate--CoA ligase [ADP-forming] subunit alpha.